We begin with the raw amino-acid sequence, 155 residues long: Protein U1 (155 aa).

The protein belongs to the nanovirus U1 protein family.

This is Protein U1 (DNA-U1) from Cicer arietinum (Chickpea).